The sequence spans 396 residues: Dimethyladenosine transferase 2, mitochondrial (396 aa).

The transit peptide at 1 to 19 (MWIPVVGLPRRLRLSALAG) directs the protein to the mitochondrion. The interval 44-64 (LSDSSPQLWPEPDFRNPPRKA) is disordered. Positions 75, 124, and 150 each coordinate S-adenosyl-L-methionine. Residues 330 to 331 (RR) form a DNA-binding region.

The protein belongs to the class I-like SAM-binding methyltransferase superfamily. rRNA adenine N(6)-methyltransferase family. KsgA subfamily. As to quaternary structure, homodimer. Component of the mitochondrial transcription initiation complex, composed at least of TFB2M, TFAM and POLRMT. In this complex TFAM recruits POLRMT to the promoter whereas TFB2M induces structural changes in POLRMT to enable promoter opening and trapping of the DNA non-template strand. Interacts with mitochondrial RNA polymerase POLRMT. Interacts with TFAM. Ubiquitously expressed.

The protein localises to the mitochondrion. It carries out the reaction adenosine in rRNA + S-adenosyl-L-methionine = N(6)-methyladenosine in rRNA + S-adenosyl-L-homocysteine + H(+). Its function is as follows. S-adenosyl-L-methionine-dependent rRNA methyltransferase which may methylate two specific adjacent adenosines in the loop of a conserved hairpin near the 3'-end of 12S mitochondrial rRNA. Component of the mitochondrial transcription initiation complex, composed at least of TFB2M, TFAM and POLRMT that is required for basal transcription of mitochondrial DNA. In this complex, TFAM recruits POLRMT to a specific promoter whereas TFB2M induces structural changes in POLRMT to enable promoter opening and trapping of the DNA non-template strand. Stimulates transcription independently of the methyltransferase activity. The chain is Dimethyladenosine transferase 2, mitochondrial from Homo sapiens (Human).